Here is a 402-residue protein sequence, read N- to C-terminus: Proline-rich protein 25 (402 aa).

Disordered stretches follow at residues 1–29 (MARTDQKPPCRGGCWGQPGHPNTGGAAAH), 109–255 (TVPG…MVGS), and 337–371 (EAAQDPATRRTAPPRRTASPEPPAPGAPLPACPGR). Residues 345-355 (RRTAPPRRTAS) show a composition bias toward low complexity. Over residues 356–367 (PEPPAPGAPLPA) the composition is skewed to pro residues.

The sequence is that of Proline-rich protein 25 (PRR25) from Homo sapiens (Human).